Reading from the N-terminus, the 303-residue chain is MATH domain and coiled-coil domain-containing protein At3g58250 (303 aa).

An MATH domain is found at 8–135; the sequence is KKKFSWVIKN…KGELKIVVEI (128 aa). The stretch at 231–287 forms a coiled coil; that stretch reads KLDWLKKKLDQVTQKKEKEAAGETRMHEIGEELKDLKLKCSDLEAQLDKEKADVLAA.

In Arabidopsis thaliana (Mouse-ear cress), this protein is MATH domain and coiled-coil domain-containing protein At3g58250.